Here is a 55-residue protein sequence, read N- to C-terminus: Large ribosomal subunit protein bL32c (55 aa).

This sequence belongs to the bacterial ribosomal protein bL32 family.

It is found in the plastid. The protein localises to the chloroplast. This Daucus carota (Wild carrot) protein is Large ribosomal subunit protein bL32c.